Consider the following 41-residue polypeptide: MKVLSSLKSAKTRHRDCKVILRRGKIFVICKSNPRFKARQR.

The protein belongs to the bacterial ribosomal protein bL36 family.

The chain is Large ribosomal subunit protein bL36 from Xylella fastidiosa (strain M23).